The chain runs to 1482 residues: Glutamate receptor ionotropic, NMDA 2B (1482 aa).

Positions 1–26 (MKPSAECCSPKFWLVLAVLAVSGSKA) are cleaved as a signal peptide. Residues 27-557 (RSQKSPPSIG…SAFLEPFSAD (531 aa)) lie on the Extracellular side of the membrane. Residue asparagine 74 is glycosylated (N-linked (GlcNAc...) asparagine). Cysteine 86 and cysteine 321 are joined by a disulfide. Residues histidine 127 and glutamate 284 each coordinate Zn(2+). N-linked (GlcNAc...) asparagine glycosylation is found at asparagine 341, asparagine 348, asparagine 444, and asparagine 491. 2 disulfide bridges follow: cysteine 429–cysteine 456 and cysteine 436–cysteine 457. The L-glutamate site is built by threonine 514 and arginine 519. N-linked (GlcNAc...) asparagine glycosylation occurs at asparagine 542. The chain crosses the membrane as a helical span at residues 558 to 576 (VWVMMFVMLLIVSAVAVFV). The Cytoplasmic portion of the chain corresponds to 577-603 (FEYFSPVGYNRCLADGREPGGPSFTIG). The discontinuously helical intramembrane region spans 604–623 (KAIWLLWGLVFNNSVPVQNP). Positions 604–623 (KAIWLLWGLVFNNSVPVQNP) are pore-forming. At 624 to 630 (KGTTSKI) the chain is on the cytoplasmic side. A helical transmembrane segment spans residues 631–646 (MVSVWAFFAVIFLASY). Residues 647–817 (TANLAAFMIQ…VMSSQLDIDN (171 aa)) lie on the Extracellular side of the membrane. A glycan (N-linked (GlcNAc...) asparagine) is linked at asparagine 688. L-glutamate-binding residues include serine 690, threonine 691, and aspartate 732. Residues cysteine 746 and cysteine 801 are joined by a disulfide bond. A helical membrane pass occupies residues 818–837 (MAGVFYMLGAAMALSLITFI). Over 838 to 1482 (CEHLFYWQFR…EKLSSIESDV (645 aa)) the chain is Cytoplasmic. Residues serine 882, serine 886, serine 917, and serine 920 each carry the phosphoserine modification. 2 positions are modified to phosphotyrosine: tyrosine 962 and tyrosine 1039. Residues serine 1058, serine 1061, and serine 1064 each carry the phosphoserine modification. Tyrosine 1109 and tyrosine 1133 each carry phosphotyrosine. A Phosphoserine modification is found at serine 1143. Tyrosine 1155 carries the post-translational modification Phosphotyrosine. The segment at 1161-1194 (DFKRDSVSGGGPCTNRSHLKHGTGEKHGVVGGVP) is disordered. Phosphoserine is present on residues serine 1255 and serine 1259. Residues 1269 to 1301 (PVAVTSNASSTKYPQSPTNSKAQKKNRNKLRRQ) form a disordered region. Residues 1272–1289 (VTSNASSTKYPQSPTNSK) show a composition bias toward polar residues. The span at 1290–1301 (AQKKNRNKLRRQ) shows a compositional bias: basic residues. The segment at 1292-1304 (KKNRNKLRRQHSY) is interaction with DAPK1. Serine 1303 bears the Phosphoserine mark. At tyrosine 1472 the chain carries Phosphotyrosine. Residues 1480–1482 (SDV) carry the PDZ-binding motif.

It belongs to the glutamate-gated ion channel (TC 1.A.10.1) family. NR2B/GRIN2B subfamily. In terms of assembly, heterotetramer. Forms heterotetrameric channels composed of two GluN1/zeta subunits (GRIN1), and two identical GluN2/epsilon subunits (GRIN2A, GRIN2B, GRIN2C or GRIN2D) or GluN3 subunits (GRIN3A or GRIN3B) (in vitro). Can also form heterotetrameric channels that contain at least two GluN1 subunits and at least two different GluN2 subunits (or a combination of one GluN2 and one GluN3 subunits) (in vitro). In vivo, the subunit composition may depend on the expression levels of the different subunits. Found in a complex with GRIN1, GRIN3A and PPP2CB. Found in a complex with GRIN1 and GRIN3B. Interacts with MAGI3. Interacts with HIP1 and NETO1. Interacts with PDZ domains of PATJ, DLG3 and DLG4. Interacts with DAPK1. Found in a complex with GRIN1 and PRR7. Interacts with PRR7. Interacts with CAMK2A. Interacts with ARC; preventing ARC oligomerization. Interacts with TMEM25. Interacts (via the extreme C-terminus) with FRMPD2 (via the second PDZ domain); the interaction is direct and is likely to promote NMDAR-mediated neural signal transmission. Interacts with FAM81A; the interaction facilitates condensate formation via liquid-liquid phase separation. Post-translationally, phosphorylated on tyrosine residues. Phosphorylation at Ser-1303 by DAPK1 enhances synaptic NMDA receptor channel activity. As to expression, expressed in the hippocampus including the dentate gyrus (at protein level). Detected in adult olfactory bulb, brain cortex, hippocampus, striatum, thalamus, superior colliculus, with much lower levels in inferior colliculus, midbrain and cerebellum.

The protein localises to the cell membrane. It is found in the postsynaptic cell membrane. The protein resides in the late endosome. It localises to the lysosome. Its subcellular location is the cytoplasm. The protein localises to the cytoskeleton. It carries out the reaction Ca(2+)(in) = Ca(2+)(out). The catalysed reaction is Na(+)(in) = Na(+)(out). The enzyme catalyses K(+)(in) = K(+)(out). Its activity is regulated as follows. NMDA glutamate receptor activity is inhibited by micromolar levels of zinc ions. NMDA glutamate receptor activity is inhibited by ifenprodil. Its function is as follows. Component of N-methyl-D-aspartate (NMDA) receptors (NMDARs) that function as heterotetrameric, ligand-gated cation channels with high calcium permeability and voltage-dependent block by Mg(2+). Participates in synaptic plasticity for learning and memory formation by contributing to the long-term depression (LTD) of hippocampus membrane currents. Channel activation requires binding of the neurotransmitter L-glutamate to the GluN2 subunit, glycine or D-serine binding to the GluN1 subunit, plus membrane depolarization to eliminate channel inhibition by Mg(2+). NMDARs mediate simultaneously the potasium efflux and the influx of calcium and sodium. Each GluN2 subunit confers differential attributes to channel properties, including activation, deactivation and desensitization kinetics, pH sensitivity, Ca2(+) permeability, and binding to allosteric modulators. In concert with DAPK1 at extrasynaptic sites, acts as a central mediator for stroke damage. Its phosphorylation at Ser-1303 by DAPK1 enhances synaptic NMDA receptor channel activity inducing injurious Ca2+ influx through them, resulting in an irreversible neuronal death. This chain is Glutamate receptor ionotropic, NMDA 2B, found in Rattus norvegicus (Rat).